Consider the following 208-residue polypeptide: Small ribosomal subunit protein uS4 (208 aa).

One can recognise an S4 RNA-binding domain in the interval 97–160 (TRLDNVCYRM…QKQLRVQEAL (64 aa)).

It belongs to the universal ribosomal protein uS4 family. As to quaternary structure, part of the 30S ribosomal subunit. Contacts protein S5. The interaction surface between S4 and S5 is involved in control of translational fidelity.

One of the primary rRNA binding proteins, it binds directly to 16S rRNA where it nucleates assembly of the body of the 30S subunit. In terms of biological role, with S5 and S12 plays an important role in translational accuracy. The chain is Small ribosomal subunit protein uS4 from Xanthomonas axonopodis pv. citri (strain 306).